A 305-amino-acid chain; its full sequence is Probable cell division protein WhiA (305 aa).

The segment at residues 269-302 (TIKELGELLEPSLGKSGVNHRLRKLVEQANELRK) is a DNA-binding region (H-T-H motif).

This sequence belongs to the WhiA family.

Involved in cell division and chromosome segregation. The sequence is that of Probable cell division protein WhiA from Lactococcus lactis subsp. lactis (strain IL1403) (Streptococcus lactis).